A 61-amino-acid chain; its full sequence is Alpha-conotoxine-like Am1.4 (61 aa).

Residues 1-21 (MGMRMMFTVFLLVVLATTVVS) form the signal peptide. A propeptide spanning residues 22 to 44 (FMSGRASHGRNAAASDLIALTIK) is cleaved from the precursor.

Belongs to the conotoxin A superfamily. In terms of processing, is not hydroxylated. Contains 2 disulfide bonds. Expressed by the venom duct.

It is found in the secreted. In terms of biological role, alpha-conotoxins act on postsynaptic membranes, they bind to the nicotinic acetylcholine receptors (nAChR) and thus inhibit them. The polypeptide is Alpha-conotoxine-like Am1.4 (Conus amadis (Amadis cone)).